A 253-amino-acid chain; its full sequence is MKKELQGALVLVSVSLGNFGDLTARARHLLEYCDILIGEEFRTTSTLLKSLSISKQFLLCNEHTTPEEIRSLGQIVVDSGLTVLVSDAGTPGIEDPGRELVGEVLRRGGRVQSAPGPIAFGAALSISGFKTSPFTFCGFLSRDSSERKLELSRYLKPGHTVVFYETPYRYKAVLRDLDSVLIETGEDRAIFFCLDLTLDSEFQFRGKLGELLKVLDTLPKGNPVIVVSQRKEQRSQRSFSKGDKKPSFKRFKK.

The segment covering 230-246 has biased composition (basic and acidic residues); it reads RKEQRSQRSFSKGDKKP. The segment at 230–253 is disordered; the sequence is RKEQRSQRSFSKGDKKPSFKRFKK.

It belongs to the methyltransferase superfamily. RsmI family.

The protein resides in the cytoplasm. The enzyme catalyses cytidine(1402) in 16S rRNA + S-adenosyl-L-methionine = 2'-O-methylcytidine(1402) in 16S rRNA + S-adenosyl-L-homocysteine + H(+). Catalyzes the 2'-O-methylation of the ribose of cytidine 1402 (C1402) in 16S rRNA. In Leptospira borgpetersenii serovar Hardjo-bovis (strain L550), this protein is Ribosomal RNA small subunit methyltransferase I.